The following is a 206-amino-acid chain: MARGKFITFEGIDGAGKTTHLQWFCDRLQERLGPTGRHVVVTREPGGTQLGETLREILLNQPMDLETEALLMFAGRREHLALVIEPALARGDWVVSDRFTDATFAYQGGGRGLPRDKLEALERWVQGGFQPDLTVLFDVQPQVASARRGAVRMPDKFESESDAFFARTRAEYLRRAHEAPHRFAIVDSSESIPQIRKQLEGVLAAL.

Residue 11–18 participates in ATP binding; the sequence is GIDGAGKT.

This sequence belongs to the thymidylate kinase family.

It catalyses the reaction dTMP + ATP = dTDP + ADP. In terms of biological role, phosphorylation of dTMP to form dTDP in both de novo and salvage pathways of dTTP synthesis. The protein is Thymidylate kinase of Burkholderia mallei (strain NCTC 10247).